The chain runs to 169 residues: N-alpha-acetyltransferase 50 (169 aa).

The region spanning 6 to 155 (IELGDVTPHN…DAHVLQKNLK (150 aa)) is the N-acetyltransferase domain. Thr12 is modified (phosphothreonine). Tyr31 is a binding site for substrate. N6-acetyllysine is present on residues Lys34 and Lys37. The active site involves Tyr73. Substrate is bound at residue Met75. Residue 77–90 (LGCLAPYRRLGIGT) coordinates acetyl-CoA. Tyr110 bears the Phosphotyrosine mark. His112 is an active-site residue. A CoA-binding site is contributed by 117–126 (NESAIDFYRK). A substrate region spans residues 138-141 (YYKR). The residue at position 140 (Lys140) is an N6-acetyllysine.

It belongs to the acetyltransferase family. GNAT subfamily. In terms of assembly, component of the N-terminal acetyltransferase E (NatE) complex at least composed of NAA10, NAA15 and NAA50. Interacts with NAA10. Interacts with NAA15. Predominantly interacts with NAA15 in the N-terminal acetyltransferase A complex (NatA complex); the interactions reduce the acetylation activity of the NatA complex. Component of the N-terminal acetyltransferase E (NatE)/HYPK complex at least composed of NAA10, NAA15, NAA50 and HYPK. Within the complex interacts with NAA15. Its capacity to interact with the NatA complex is reduced by HYPK. Interacts with NAA35.

It is found in the cytoplasm. The protein localises to the nucleus. The catalysed reaction is N-terminal L-methionyl-L-alanyl-[protein] + acetyl-CoA = N-terminal N(alpha)-acetyl-L-methionyl-L-alanyl-[protein] + CoA + H(+). It carries out the reaction N-terminal L-methionyl-L-seryl-[protein] + acetyl-CoA = N-terminal N(alpha)-acetyl-L-methionyl-L-seryl-[protein] + CoA + H(+). It catalyses the reaction N-terminal L-methionyl-L-valyl-[protein] + acetyl-CoA = N-terminal N(alpha)-acetyl-L-methionyl-L-valyl-[protein] + CoA + H(+). The enzyme catalyses N-terminal L-methionyl-L-threonyl-[protein] + acetyl-CoA = N-terminal N(alpha)-acetyl-L-methionyl-L-threonyl-[protein] + CoA + H(+). The catalysed reaction is N-terminal L-methionyl-L-lysyl-[protein] + acetyl-CoA = N-terminal N(alpha)-acetyl-L-methionyl-L-lysyl-[protein] + CoA + H(+). It carries out the reaction N-terminal L-methionyl-L-leucyl-[protein] + acetyl-CoA = N-terminal N(alpha)-acetyl-L-methionyl-L-leucyl-[protein] + CoA + H(+). It catalyses the reaction N-terminal L-methionyl-L-phenylalanyl-[protein] + acetyl-CoA = N-terminal N(alpha)-acetyl-L-methionyl-L-phenylalanyl-[protein] + CoA + H(+). The enzyme catalyses N-terminal L-methionyl-L-tyrosyl-[protein] + acetyl-CoA = N-terminal N(alpha)-acetyl-L-methionyl-L-tyrosyl-[protein] + CoA + H(+). Functionally, N-alpha-acetyltransferase that acetylates the N-terminus of proteins that retain their initiating methionine. Has a broad substrate specificity: able to acetylate the initiator methionine of most peptides, except for those with a proline in second position. Also displays N-epsilon-acetyltransferase activity by mediating acetylation of the side chain of specific lysines on proteins. Autoacetylates in vivo. The relevance of N-epsilon-acetyltransferase activity is however unclear: able to acetylate H4 in vitro, but this result has not been confirmed in vivo. Component of N-alpha-acetyltransferase complexes containing NAA10 and NAA15, which has N-alpha-acetyltransferase activity. Does not influence the acetyltransferase activity of NAA10. However, it negatively regulates the N-alpha-acetyltransferase activity of the N-terminal acetyltransferase A complex (also called the NatA complex). The multiprotein complexes probably constitute the major contributor for N-terminal acetylation at the ribosome exit tunnel, with NAA10 acetylating all amino termini that are devoid of methionine and NAA50 acetylating other peptides. Required for sister chromatid cohesion during mitosis by promoting binding of CDCA5/sororin to cohesin: may act by counteracting the function of NAA10. This chain is N-alpha-acetyltransferase 50, found in Mus musculus (Mouse).